The sequence spans 375 residues: Alcohol dehydrogenase 1 (375 aa).

Residue alanine 1 is modified to N-acetylalanine. Positions 46, 68, 98, 101, 104, 112, and 175 each coordinate Zn(2+). NAD(+) is bound by residues 200–205, aspartate 224, lysine 229, 293–295, and arginine 370; these read GLGGVG and VGV.

This sequence belongs to the zinc-containing alcohol dehydrogenase family. Class-I subfamily. In terms of assembly, homodimer. Zn(2+) is required as a cofactor.

The protein resides in the cytoplasm. It carries out the reaction a primary alcohol + NAD(+) = an aldehyde + NADH + H(+). The catalysed reaction is a secondary alcohol + NAD(+) = a ketone + NADH + H(+). The protein is Alcohol dehydrogenase 1 of Columba livia (Rock dove).